Reading from the N-terminus, the 345-residue chain is uncharacterized protein (345 aa).

This is an uncharacterized protein from Acidianus filamentous virus 2 (isolate Italy/Pozzuoli) (AFV-2).